A 298-amino-acid chain; its full sequence is Protein BZR1 homolog 1 (298 aa).

Disordered stretches follow at residues 1 to 25, 71 to 129, 153 to 175, and 190 to 217; these read MTSG…RRER, GTTY…SPSR, VSSS…PKIR, and AVSA…ESDV. A required for DNA-binding region spans residues 10-91; it reads RTPTWKEREN…PSSAGGASVG (82 aa). Over residues 96-128 the composition is skewed to low complexity; it reads SSTQLLSAPSSSFPSPVPSYHASPASSSFPSPS. The residue at position 156 (S156) is a Phosphoserine. A PEST-like region spans residues 204–224; the sequence is EHPDTIPECDESDVSTVDSGR.

This sequence belongs to the BZR/LAT61 family. As to quaternary structure, interacts with GF14C. Interacts with PUB24. Interacts with SMOS1. Phosphorylated on serine and threonine residues by GSK2. Dephosphorylated during response to brassinosteroid. Post-translationally, ubiquitinated by PUB24. Ubiquitination leads to its subsequent degradation by the 26S proteasome, thus reducing sensitivity to brassinosteroid signaling.

Its subcellular location is the nucleus. It is found in the cytoplasm. Its function is as follows. Positive brassinosteroid-signaling protein. Mediates downstream brassinosteroid-regulated growth response and feedback inhibition of brassinosteroid (BR) biosynthetic genes. May act as transcriptional repressor by binding the brassinosteroid-response element (BREE) (5'-CGTG(T/C)G-3') in the promoter of DLT (AC Q9LWU9), another positive regulator of BR signaling. Acts as a transcriptional repressor of LIC, a negative regulator of BR signaling, by binding to the BRRE element of its promoter. BZR1 and LIC play opposite roles in BR signaling and regulation of leaf bending. This chain is Protein BZR1 homolog 1, found in Oryza sativa subsp. japonica (Rice).